Here is a 225-residue protein sequence, read N- to C-terminus: Orotate phosphoribosyltransferase (225 aa).

Residue Lys-29 participates in 5-phospho-alpha-D-ribose 1-diphosphate binding. 37–38 (FF) contributes to the orotate binding site. Residues 75 to 76 (YK), Arg-101, Lys-102, Lys-105, His-107, and 126 to 134 (DDVISAGTS) contribute to the 5-phospho-alpha-D-ribose 1-diphosphate site. Orotate-binding residues include Ser-130 and Arg-158.

This sequence belongs to the purine/pyrimidine phosphoribosyltransferase family. PyrE subfamily. Homodimer. The cofactor is Mg(2+).

It carries out the reaction orotidine 5'-phosphate + diphosphate = orotate + 5-phospho-alpha-D-ribose 1-diphosphate. It functions in the pathway pyrimidine metabolism; UMP biosynthesis via de novo pathway; UMP from orotate: step 1/2. Its function is as follows. Catalyzes the transfer of a ribosyl phosphate group from 5-phosphoribose 1-diphosphate to orotate, leading to the formation of orotidine monophosphate (OMP). The sequence is that of Orotate phosphoribosyltransferase from Ralstonia pickettii (strain 12J).